Reading from the N-terminus, the 257-residue chain is 4-hydroxy-tetrahydrodipicolinate reductase (257 aa).

Residue 7–12 (GCLGRM) coordinates NAD(+). Arg34 serves as a coordination point for NADP(+). NAD(+)-binding positions include 96-98 (GTT) and 117-120 (SCNM). The Proton donor/acceptor role is filled by His149. His150 serves as a coordination point for (S)-2,3,4,5-tetrahydrodipicolinate. The Proton donor role is filled by Lys153. Position 159 to 160 (159 to 160 (GT)) interacts with (S)-2,3,4,5-tetrahydrodipicolinate.

Belongs to the DapB family.

It localises to the cytoplasm. The enzyme catalyses (S)-2,3,4,5-tetrahydrodipicolinate + NAD(+) + H2O = (2S,4S)-4-hydroxy-2,3,4,5-tetrahydrodipicolinate + NADH + H(+). It catalyses the reaction (S)-2,3,4,5-tetrahydrodipicolinate + NADP(+) + H2O = (2S,4S)-4-hydroxy-2,3,4,5-tetrahydrodipicolinate + NADPH + H(+). The protein operates within amino-acid biosynthesis; L-lysine biosynthesis via DAP pathway; (S)-tetrahydrodipicolinate from L-aspartate: step 4/4. In terms of biological role, catalyzes the conversion of 4-hydroxy-tetrahydrodipicolinate (HTPA) to tetrahydrodipicolinate. This is 4-hydroxy-tetrahydrodipicolinate reductase from Anaplasma marginale (strain St. Maries).